Here is a 47-residue protein sequence, read N- to C-terminus: Putative heat shock protein HSP90 (47 aa).

Arginine 47 contributes to the ATP binding site.

The protein belongs to the heat shock protein 90 family. As to quaternary structure, homodimer.

It is found in the cytoplasm. Its function is as follows. Putative molecular chaperone that may promote the maturation, structural maintenance and proper regulation of specific target proteins. The sequence is that of Putative heat shock protein HSP90 from Populus euphratica (Euphrates poplar).